The primary structure comprises 126 residues: C-type natriuretic peptide (126 aa).

The signal sequence occupies residues 1–23 (MHLSQLLACALLLTLLSLRPSEA). The tract at residues 19–72 (RPSEAKPGAPPKVPRTPPGEEVAEPQAAGGGQKKGDKTPGGGGANLKGDRSRLL) is disordered. Residues 24-73 (KPGAPPKVPRTPPGEEVAEPQAAGGGQKKGDKTPGGGGANLKGDRSRLLR) constitute a propeptide that is removed on maturation. The span at 26-35 (GAPPKVPRTP) shows a compositional bias: pro residues. Residues 46–63 (AGGGQKKGDKTPGGGGAN) are compositionally biased toward gly residues. A disulfide bond links Cys-110 and Cys-126.

It belongs to the natriuretic peptide family. Post-translationally, degraded by IDE (in vitro).

Its subcellular location is the secreted. Functionally, hormone which plays a role in endochondral ossification through regulation of cartilaginous growth plate chondrocytes proliferation and differentiation. May also be vasoactive and natriuretic. Acts by specifically binding and stimulating NPR2 to produce cGMP. Binds the clearance receptor NPR3. The sequence is that of C-type natriuretic peptide (NPPC) from Sus scrofa (Pig).